The primary structure comprises 343 residues: Probable F-box protein At1g67455 (343 aa).

In terms of domain architecture, F-box spans 1–46; sequence MMISDLPEDMVEEILSRVSIISLGALRWNDLSKARVICKAEARQQF.

The sequence is that of Probable F-box protein At1g67455 from Arabidopsis thaliana (Mouse-ear cress).